A 103-amino-acid chain; its full sequence is UPF0145 protein CYA_2258 (103 aa).

The protein belongs to the UPF0145 family.

This chain is UPF0145 protein CYA_2258, found in Synechococcus sp. (strain JA-3-3Ab) (Cyanobacteria bacterium Yellowstone A-Prime).